We begin with the raw amino-acid sequence, 263 residues long: Oxidoreductase UcpA (263 aa).

Residue Leu10–Asn32 coordinates NAD(+). Ser141 lines the substrate pocket. Tyr155 serves as the catalytic Proton acceptor.

The protein belongs to the short-chain dehydrogenases/reductases (SDR) family.

The sequence is that of Oxidoreductase UcpA (ucpA) from Salmonella typhi.